The primary structure comprises 349 residues: Interferon-stimulated 20 kDa exonuclease-like 2 (349 aa).

2 disordered regions span residues M1–P100 and A126–G166. Residues P14–A23 are compositionally biased toward basic and acidic residues. Positions K24–P47 are enriched in basic residues. Residues L54–R66 show a composition bias toward basic and acidic residues. The segment covering T70 to S87 has biased composition (low complexity). A compositionally biased stretch (basic residues) spans I130–S142. The Exonuclease domain maps to M175–Y331.

Its subcellular location is the nucleus. The protein resides in the nucleolus. Its function is as follows. 3'-&gt; 5'-exoribonuclease involved in ribosome biogenesis in the processing of the 12S pre-rRNA. Displays a strong specificity for a 3'-end containing a free hydroxyl group. This is Interferon-stimulated 20 kDa exonuclease-like 2 (ISG20L2) from Bos taurus (Bovine).